The primary structure comprises 410 residues: Transcription factor rglT (410 aa).

A disordered region spans residues 1–24 (MQFDSLPLPPSSSHDTTSVPPLKR). Positions 28–55 (CDECRKRKLKCSGEATGCSRCLKQSLPC) form a DNA-binding region, zn(2)-C6 fungal-type. The segment at 353–372 (HRTRTVESPNEPGSCSPVSH) is disordered. Over residues 358 to 369 (VESPNEPGSCSP) the composition is skewed to polar residues.

The protein resides in the nucleus. Functionally, transcription factor that is involved in protection against oxidative stress. Binds to promoter regions of the gliotoxin (GT) biosynthetic genes gliZ, gliF, gliT, gliM, gliA and gtmA. Two related but different DNA motifs (5'-TCGG-3' and 5'-CGGNCGG-3') are specifically enriched among rglT binding sites in GT-inducing conditions. Also indirectly regulates the expression of gliP, gliG, gliH and gliN. Plays a key role in resistance against exogenously-added GT and GT biosynthesis, mainly through the direct regulation of gliT. Furthermore, rglT is important for virulence in chemotherapeutic mice with invasive pulmonary aspergillosis (IPA). The chain is Transcription factor rglT from Aspergillus fumigatus (strain CBS 144.89 / FGSC A1163 / CEA10) (Neosartorya fumigata).